The following is a 707-amino-acid chain: Ornithine decarboxylase (707 aa).

The interval 83–102 (NRNPLSRADSAAGREETAQT) is disordered. Lysine 288 carries the post-translational modification N6-(pyridoxal phosphate)lysine. Residues serine 421, glycine 458, and 498-501 (EPGR) contribute to the pyridoxal 5'-phosphate site. Substrate is bound at residue 561–562 (FD). The active-site Proton donor; shared with dimeric partner is cysteine 634. Substrate is bound at residue aspartate 635. Tyrosine 663 contributes to the pyridoxal 5'-phosphate binding site.

Belongs to the Orn/Lys/Arg decarboxylase class-II family. In terms of assembly, homodimer. Only the dimer is catalytically active, as the active sites are constructed of residues from both monomers. Pyridoxal 5'-phosphate serves as cofactor.

The catalysed reaction is L-ornithine + H(+) = putrescine + CO2. It participates in amine and polyamine biosynthesis; putrescine biosynthesis via L-ornithine pathway; putrescine from L-ornithine: step 1/1. Its activity is regulated as follows. Inhibited by antizyme (AZ) in response to polyamine levels. AZ inhibits the assembly of the functional homodimer by binding to ODC monomers and targeting them for ubiquitin-independent proteolytic destruction by the 26S proteasome. Inhibited by 1-amino-oxy-3-aminopropane (APA, an isosteric analog of putrescine). Irreversibly inhibited by alpha-difluoromethylornithine (DFMO, a curative agent of West African sleeping sickness). Functionally, catalyzes the first and rate-limiting step of polyamine biosynthesis that converts ornithine into putrescine, which is the precursor for the polyamines, spermidine and spermine. Polyamines are essential for cell proliferation and are implicated in cellular processes, ranging from DNA replication to apoptosis. This Leishmania donovani protein is Ornithine decarboxylase.